The following is an 86-amino-acid chain: Cell division topological specificity factor (86 aa).

It belongs to the MinE family.

Functionally, prevents the cell division inhibition by proteins MinC and MinD at internal division sites while permitting inhibition at polar sites. This ensures cell division at the proper site by restricting the formation of a division septum at the midpoint of the long axis of the cell. This Allorhizobium ampelinum (strain ATCC BAA-846 / DSM 112012 / S4) (Agrobacterium vitis (strain S4)) protein is Cell division topological specificity factor.